The chain runs to 474 residues: Vasculin-like protein 1 (474 aa).

The tract at residues 17–42 (QSAKSPTATFEKHGEHLPRGEGRFGV) is disordered. Residues 26–38 (FEKHGEHLPRGEG) are compositionally biased toward basic and acidic residues. Phosphoserine occurs at positions 49 and 76. The tract at residues 91–191 (GNPSGWHSSS…VWENPPSAKQ (101 aa)) is disordered. Residues 116–128 (NHRHWNGSFHSRK) show a composition bias toward basic residues. Residues 136-154 (PPMEIREEKKEDKVEKLQF) show a composition bias toward basic and acidic residues. Position 202 is a phosphoserine (serine 202). A disordered region spans residues 238–371 (LVPKPVPPPS…EEGCHQNGLA (134 aa)). Residues 262–277 (GSLSSSRESAFTSPIS) show a composition bias toward polar residues. The span at 291-312 (SSPKESPSSTTPPIEISSSRLT) shows a compositional bias: low complexity. Residue serine 292 is modified to Phosphoserine. Phosphothreonine is present on threonine 301. Basic and acidic residues-rich tracts occupy residues 317 to 346 (RTTD…CDKL) and 356 to 365 (EPKENGEEGC). Serine 382 carries the phosphoserine modification. Residues 453–474 (AEFEDSDTETSSSETSDDDAWK) form a disordered region.

This sequence belongs to the vasculin family.

It is found in the nucleus. In terms of biological role, possible transcription factor. The polypeptide is Vasculin-like protein 1 (GPBP1L1) (Homo sapiens (Human)).